A 1338-amino-acid chain; its full sequence is Centrosomal P4.1-associated protein (1338 aa).

A disordered region spans residues Gly190–Gly211. A phosphoserine mark is found at Ser260 and Ser316. Residues Val319 to Lys394 form an alpha/beta-tubulin binding region. 3 disordered regions span residues Thr386–Lys414, Pro436–Lys479, and Gln521–Ser551. Positions Leu400 to Asp409 are enriched in polar residues. The residue at position 540 (Ser540) is a Phosphoserine. The segment covering Pro541–Glu550 has biased composition (basic and acidic residues). Ser589 carries the post-translational modification Phosphoserine; by PLK2. Ser595 bears the Phosphoserine; by PLK2 and PLK4 mark. 3 disordered regions span residues His611–Ser789, Val845–Leu865, and Tyr1096–Ile1153. Basic and acidic residues predominate over residues Asn635–Glu650. Positions Gln679–Trp689 are enriched in polar residues. The span at Ser717–Ser764 shows a compositional bias: basic and acidic residues. Phosphoserine is present on Ser759. The segment at Gln895–Leu1338 is interaction with STIL. A compositionally biased stretch (acidic residues) spans Tyr1140–Ile1149.

It belongs to the TCP10 family. In terms of assembly, forms homodimers. Associates with microtubules plus ends; binds to beta-tubulin subunits exposed on microtubule outer surface at its distal tip; also associates with microtubule lattice. Associated with the gamma-tubulin complex. Interacts with the head domain of EPB41. Interacts with LYST. Interacts with CEP152 (via C-terminus). Interacts with STIL. Forms a complex with STIL and SASS6. Post-translationally, phosphorylation at Ser-589 and Ser-595 by PLK2 is required for procentriole formation and centriole elongation. Phosphorylation by PLK2 oscillates during the cell cycle: it increases at G1/S transition and decreases during the exit from mitosis. Phosphorylation at Ser-595 is also mediated by PLK4 but is not a critical step in PLK4 function in procentriole assembly.

It is found in the cytoplasm. The protein localises to the cytoskeleton. Its subcellular location is the microtubule organizing center. The protein resides in the centrosome. It localises to the centriole. Functionally, plays an important role in cell division and centrosome function by participating in centriole duplication. Inhibits microtubule nucleation from the centrosome. Involved in the regulation of slow processive growth of centriolar microtubules. Acts as a microtubule plus-end tracking protein that stabilizes centriolar microtubules and inhibits microtubule polymerization and extension from the distal ends of centrioles. Required for centriole elongation and for STIL-mediated centriole amplification. Required for the recruitment of CEP295 to the proximal end of new-born centrioles at the centriolar microtubule wall during early S phase in a PLK4-dependent manner. May be involved in the control of centriolar-microtubule growth by acting as a regulator of tubulin release. This chain is Centrosomal P4.1-associated protein, found in Homo sapiens (Human).